Reading from the N-terminus, the 234-residue chain is Peptidyl-prolyl cis-trans isomerase, rhodopsin-specific isozyme (234 aa).

The first 19 residues, 1–19, serve as a signal peptide directing secretion; that stretch reads MNILKILILLELIYTCVSG. The 159-residue stretch at 29-187 folds into the PPIase cyclophilin-type domain; sequence YMDVKHQKKP…DPVIIVNCGE (159 aa). Asn-67 carries an N-linked (GlcNAc...) asparagine glycan. The helical transmembrane segment at 202 to 222 threads the bilayer; that stretch reads ILGWIKAAGLPFCSSFIVLMI.

Belongs to the cyclophilin-type PPIase family. Expressed specifically in photoreceptor cells.

It localises to the membrane. It carries out the reaction [protein]-peptidylproline (omega=180) = [protein]-peptidylproline (omega=0). Its function is as follows. PPIases accelerate the folding of proteins. It catalyzes the cis-trans isomerization of proline imidic peptide bonds in oligopeptides. Acts on the folding of rhodopsin RH1 and RH2 (but not RH3) and is required for visual transduction. The chain is Peptidyl-prolyl cis-trans isomerase, rhodopsin-specific isozyme (NINAA) from Calliphora vicina (Blue blowfly).